A 428-amino-acid chain; its full sequence is Serine--tRNA ligase (428 aa).

Residue Thr235–Glu237 coordinates L-serine. Residue Arg266–Glu268 participates in ATP binding. Glu289 contributes to the L-serine binding site. ATP is bound at residue Glu353–Ser356. Residue Ser389 coordinates L-serine.

The protein belongs to the class-II aminoacyl-tRNA synthetase family. Type-1 seryl-tRNA synthetase subfamily. In terms of assembly, homodimer. The tRNA molecule binds across the dimer.

Its subcellular location is the cytoplasm. The catalysed reaction is tRNA(Ser) + L-serine + ATP = L-seryl-tRNA(Ser) + AMP + diphosphate + H(+). The enzyme catalyses tRNA(Sec) + L-serine + ATP = L-seryl-tRNA(Sec) + AMP + diphosphate + H(+). Its pathway is aminoacyl-tRNA biosynthesis; selenocysteinyl-tRNA(Sec) biosynthesis; L-seryl-tRNA(Sec) from L-serine and tRNA(Sec): step 1/1. Catalyzes the attachment of serine to tRNA(Ser). Is also able to aminoacylate tRNA(Sec) with serine, to form the misacylated tRNA L-seryl-tRNA(Sec), which will be further converted into selenocysteinyl-tRNA(Sec). This Shewanella baltica (strain OS223) protein is Serine--tRNA ligase.